Here is a 243-residue protein sequence, read N- to C-terminus: UPF0173 metal-dependent hydrolase Caur_2542 (243 aa).

Belongs to the UPF0173 family.

The sequence is that of UPF0173 metal-dependent hydrolase Caur_2542 from Chloroflexus aurantiacus (strain ATCC 29366 / DSM 635 / J-10-fl).